The following is a 152-amino-acid chain: UPF0735 ACT domain-containing protein SAS1579 (152 aa).

Positions 75–150 constitute an ACT domain; sequence TLILYVTDIV…YVSKVELISM (76 aa).

This sequence belongs to the UPF0735 family.

This chain is UPF0735 ACT domain-containing protein SAS1579, found in Staphylococcus aureus (strain MSSA476).